Consider the following 200-residue polypeptide: ATP-dependent Clp protease proteolytic subunit 2 (200 aa).

The active-site Nucleophile is the Ser96. His121 is a catalytic residue.

The protein belongs to the peptidase S14 family. In terms of assembly, fourteen ClpP subunits assemble into 2 heptameric rings which stack back to back to give a disk-like structure with a central cavity, resembling the structure of eukaryotic proteasomes.

Its subcellular location is the cytoplasm. It catalyses the reaction Hydrolysis of proteins to small peptides in the presence of ATP and magnesium. alpha-casein is the usual test substrate. In the absence of ATP, only oligopeptides shorter than five residues are hydrolyzed (such as succinyl-Leu-Tyr-|-NHMec, and Leu-Tyr-Leu-|-Tyr-Trp, in which cleavage of the -Tyr-|-Leu- and -Tyr-|-Trp bonds also occurs).. In terms of biological role, cleaves peptides in various proteins in a process that requires ATP hydrolysis. Has a chymotrypsin-like activity. Plays a major role in the degradation of misfolded proteins. This chain is ATP-dependent Clp protease proteolytic subunit 2, found in Synechococcus sp. (strain JA-2-3B'a(2-13)) (Cyanobacteria bacterium Yellowstone B-Prime).